We begin with the raw amino-acid sequence, 919 residues long: Beta-galactosidase 15 (919 aa).

An N-terminal signal peptide occupies residues Met1–Ala31. Asn63 is a glycosylation site (N-linked (GlcNAc...) asparagine). Glu220 (proton donor) is an active-site residue. Residue Glu289 is the Nucleophile of the active site. 4 N-linked (GlcNAc...) asparagine glycosylation sites follow: Asn412, Asn530, Asn546, and Asn855. The region spanning Asn822–Ser907 is the SUEL-type lectin domain.

Belongs to the glycosyl hydrolase 35 family.

Its subcellular location is the secreted. It is found in the extracellular space. The protein localises to the apoplast. It carries out the reaction Hydrolysis of terminal non-reducing beta-D-galactose residues in beta-D-galactosides.. The polypeptide is Beta-galactosidase 15 (Oryza sativa subsp. japonica (Rice)).